We begin with the raw amino-acid sequence, 433 residues long: Ribosome biogenesis protein WDR12 homolog (433 aa).

The residue at position 1 (methionine 1) is an N-acetylmethionine. Residues 12-96 (LHVKFVTKLD…ERTLEIEYIR (85 aa)) are ubiquitin-like (UBL) domain. 7 WD repeats span residues 108–146 (LHDD…SHIL), 148–191 (GHSG…SVDS), 203–242 (GHKA…SEGE), 270–308 (GHTQ…DSLN), 310–350 (FCGK…TSAP), 356–396 (SHSS…PLSV), and 399–433 (THND…IAIS). Residues 238–263 (TSEGESVSVKKRKGNNQAEESQSEGE) form a disordered region.

The protein belongs to the WD repeat WDR12/YTM1 family. In terms of assembly, interacts with PES. Interacts with BOP1.

The protein localises to the nucleus. The protein resides in the nucleolus. It is found in the nucleoplasm. Its function is as follows. Required for maturation of ribosomal RNAs and formation of the large ribosomal subunit. The chain is Ribosome biogenesis protein WDR12 homolog from Arabidopsis thaliana (Mouse-ear cress).